Here is a 601-residue protein sequence, read N- to C-terminus: Putative Lon protease homolog (601 aa).

The 198-residue stretch at 363–560 (GEIVGQINGL…YQACELLFGR (198 aa)) folds into the Lon proteolytic domain. Catalysis depends on residues Ser-455 and Lys-498.

The protein belongs to the peptidase S16 family.

This is Putative Lon protease homolog from Haemophilus influenzae (strain ATCC 51907 / DSM 11121 / KW20 / Rd).